A 96-amino-acid chain; its full sequence is UPF0184 protein CG14818 (96 aa).

2 disordered regions span residues 1–28 (MSPK…LQEM) and 70–96 (IAEE…AAPK). Polar residues predominate over residues 8–21 (DPSSSGDSGNTNVQ). Residues 21 to 77 (QEADLQEMEDVNNSLDALSCALDAVEQRTDDIMSQLRELLNSNREIRRLIAEENDNA) are a coiled coil. A compositionally biased stretch (acidic residues) spans 72–85 (EENDNAPESGDDNM).

The protein belongs to the UPF0184 (EST00098) family.

In Drosophila melanogaster (Fruit fly), this protein is UPF0184 protein CG14818.